Consider the following 359-residue polypeptide: 3-dehydroquinate synthase (359 aa).

NAD(+) is bound by residues 105 to 109 (GVVGD), 129 to 130 (TT), lysine 142, lysine 151, and 169 to 172 (TIKT). Zn(2+)-binding residues include glutamate 184, histidine 247, and histidine 263.

The protein belongs to the sugar phosphate cyclases superfamily. Dehydroquinate synthase family. The cofactor is Co(2+). Requires Zn(2+) as cofactor. NAD(+) serves as cofactor.

It localises to the cytoplasm. It carries out the reaction 7-phospho-2-dehydro-3-deoxy-D-arabino-heptonate = 3-dehydroquinate + phosphate. Its pathway is metabolic intermediate biosynthesis; chorismate biosynthesis; chorismate from D-erythrose 4-phosphate and phosphoenolpyruvate: step 2/7. In terms of biological role, catalyzes the conversion of 3-deoxy-D-arabino-heptulosonate 7-phosphate (DAHP) to dehydroquinate (DHQ). This is 3-dehydroquinate synthase from Ruminiclostridium cellulolyticum (strain ATCC 35319 / DSM 5812 / JCM 6584 / H10) (Clostridium cellulolyticum).